A 299-amino-acid polypeptide reads, in one-letter code: Coenzyme PQQ synthesis protein B (299 aa).

The protein belongs to the PqqB family.

Its pathway is cofactor biosynthesis; pyrroloquinoline quinone biosynthesis. Its function is as follows. May be involved in the transport of PQQ or its precursor to the periplasm. This chain is Coenzyme PQQ synthesis protein B, found in Methylorubrum populi (strain ATCC BAA-705 / NCIMB 13946 / BJ001) (Methylobacterium populi).